The chain runs to 126 residues: Holo-[acyl-carrier-protein] synthase (126 aa).

Mg(2+) contacts are provided by aspartate 9 and glutamate 58.

This sequence belongs to the P-Pant transferase superfamily. AcpS family. The cofactor is Mg(2+).

It is found in the cytoplasm. It carries out the reaction apo-[ACP] + CoA = holo-[ACP] + adenosine 3',5'-bisphosphate + H(+). Its function is as follows. Transfers the 4'-phosphopantetheine moiety from coenzyme A to a Ser of acyl-carrier-protein. This is Holo-[acyl-carrier-protein] synthase from Vibrio atlanticus (strain LGP32) (Vibrio splendidus (strain Mel32)).